Here is a 206-residue protein sequence, read N- to C-terminus: Adenylate kinase (206 aa).

10 to 15 contributes to the ATP binding site; it reads GAGKGT. The interval 30-59 is NMP; that stretch reads STGDILREAVQKGTPLGKKAKEYMERGELV. AMP is bound by residues Thr-31, 57–59, 82–85, and Gln-89; these read ELV and GFPR. ATP-binding positions include Arg-120, Arg-124, and 133–134; that span reads VY. Residues 123–153 form an LID region; it reads GRRINPETGEVYHVKYNPPPPGVKVIQREDD. Residue Arg-161 participates in AMP binding. Lys-189 contributes to the ATP binding site.

This sequence belongs to the adenylate kinase family. Monomer.

The protein resides in the cytoplasm. It carries out the reaction AMP + ATP = 2 ADP. It participates in purine metabolism; AMP biosynthesis via salvage pathway; AMP from ADP: step 1/1. Catalyzes the reversible transfer of the terminal phosphate group between ATP and AMP. Plays an important role in cellular energy homeostasis and in adenine nucleotide metabolism. In Aquifex aeolicus (strain VF5), this protein is Adenylate kinase.